The sequence spans 138 residues: Putative pre-16S rRNA nuclease (138 aa).

This sequence belongs to the YqgF nuclease family.

It localises to the cytoplasm. In terms of biological role, could be a nuclease involved in processing of the 5'-end of pre-16S rRNA. This is Putative pre-16S rRNA nuclease from Klebsiella pneumoniae (strain 342).